Reading from the N-terminus, the 570-residue chain is Methionine--tRNA ligase (570 aa).

Residues 14 to 24 carry the 'HIGH' region motif; the sequence is PYINGIKHLGN. The Zn(2+) site is built by Cys146, Cys149, Cys159, and Cys162. Positions 347-351 match the 'KMSKS' region motif; that stretch reads QFSTS. An ATP-binding site is contributed by Thr350.

This sequence belongs to the class-I aminoacyl-tRNA synthetase family. MetG type 1 subfamily. As to quaternary structure, monomer. Requires Zn(2+) as cofactor.

The protein localises to the cytoplasm. It catalyses the reaction tRNA(Met) + L-methionine + ATP = L-methionyl-tRNA(Met) + AMP + diphosphate. Functionally, is required not only for elongation of protein synthesis but also for the initiation of all mRNA translation through initiator tRNA(fMet) aminoacylation. The protein is Methionine--tRNA ligase of Jannaschia sp. (strain CCS1).